A 361-amino-acid chain; its full sequence is Cyclic AMP receptor-like protein C (361 aa).

The Extracellular segment spans residues 1–18 (MGIEESQICNPSDREFLS). A helical membrane pass occupies residues 19–39 (VDILNIVTSSLSLMGSALTII). At 40-113 (SYIWKKVRRH…HGTYKQPTSK (74 aa)) the chain is on the cytoplasmic side. Residues 114–134 (LPLLIFMLSIADFFTSFFIII) form a helical membrane-spanning segment. Topologically, residues 135-166 (SQSYLINNSKSYSTPYSPDLKIHFSPCIILRA) are extracellular. Residues 167–187 (IIQFFFLSTFFWTTCISYYLF) form a helical membrane-spanning segment. Topologically, residues 188-197 (HQLSSPGEEK) are cytoplasmic. Residues 198-218 (YLLAIFNVVSWGIPFAISMVI) traverse the membrane as a helical segment. At 219 to 238 (TMTNSIVVNSDGWCEVAKPM) the chain is on the extracellular side. Residues 239-259 (ELSLWFLPLFLCLLVCSIYYF) traverse the membrane as a helical segment. Residues 260-292 (RLRRLFRSKFEYRLQINDRLKQLDSTISRRLTL) are Cytoplasmic-facing. A helical membrane pass occupies residues 293–313 (YIVVFVICWLPDVIQHFISFF). The Extracellular portion of the chain corresponds to 314–318 (SKCTF). Residues 319-339 (FPLLILQNILTPSQGFWNFWI) traverse the membrane as a helical segment. Topologically, residues 340–361 (YSYTNKIARFTPSNDENKRLLQ) are cytoplasmic.

This sequence belongs to the G-protein coupled receptor 5 family.

The protein localises to the membrane. Its function is as follows. Receptor for cAMP. The polypeptide is Cyclic AMP receptor-like protein C (crlC) (Dictyostelium discoideum (Social amoeba)).